The following is a 404-amino-acid chain: NADH-quinone oxidoreductase subunit D 2 (404 aa).

This sequence belongs to the complex I 49 kDa subunit family. As to quaternary structure, NDH-1 is composed of 14 different subunits. Subunits NuoB, C, D, E, F, and G constitute the peripheral sector of the complex.

The protein resides in the cell inner membrane. It carries out the reaction a quinone + NADH + 5 H(+)(in) = a quinol + NAD(+) + 4 H(+)(out). Functionally, NDH-1 shuttles electrons from NADH, via FMN and iron-sulfur (Fe-S) centers, to quinones in the respiratory chain. The immediate electron acceptor for the enzyme in this species is believed to be ubiquinone. Couples the redox reaction to proton translocation (for every two electrons transferred, four hydrogen ions are translocated across the cytoplasmic membrane), and thus conserves the redox energy in a proton gradient. This chain is NADH-quinone oxidoreductase subunit D 2, found in Rhizobium etli (strain CIAT 652).